We begin with the raw amino-acid sequence, 176 residues long: RNA pyrophosphohydrolase (176 aa).

The Nudix hydrolase domain maps to 6-149; it reads GYRPNVGIVI…KRDVYRRVMK (144 aa). Residues 38-59 carry the Nudix box motif; sequence GGINPGESAEQAMYRELFEEVG.

This sequence belongs to the Nudix hydrolase family. RppH subfamily. The cofactor is a divalent metal cation.

In terms of biological role, accelerates the degradation of transcripts by removing pyrophosphate from the 5'-end of triphosphorylated RNA, leading to a more labile monophosphorylated state that can stimulate subsequent ribonuclease cleavage. The sequence is that of RNA pyrophosphohydrolase from Shigella dysenteriae serotype 1 (strain Sd197).